Consider the following 238-residue polypeptide: MTIRNVTRGLRCTLAFRTLPNALPVQASLCRVDCALLSTTCARRKSGLKADGSRADQAEAGASQSLDKQSRTLDSVRDDTLSDPYPLPFSPDIVELNSVKTRVEAGLESKWSGVNLASSQQTLNHIDAPMRVPGRDSEARETKIARLIYQTRKRGTLETDLLLSTFAKKELKNLPDAELDEFDRLLDEPDWDIFYWCTQRKPIPARWAHSFNTAGKLGHRLVAHTRNDEKAVRWMPEL.

Residues 47–82 (GLKADGSRADQAEAGASQSLDKQSRTLDSVRDDTLS) are disordered. Basic and acidic residues predominate over residues 68–80 (KQSRTLDSVRDDT).

It belongs to the SDHAF2 family. In terms of assembly, interacts with the flavoprotein subunit within the SDH catalytic dimer.

The protein resides in the mitochondrion matrix. Functionally, plays an essential role in the assembly of succinate dehydrogenase (SDH), an enzyme complex (also referred to as respiratory complex II) that is a component of both the tricarboxylic acid (TCA) cycle and the mitochondrial electron transport chain, and which couples the oxidation of succinate to fumarate with the reduction of ubiquinone (coenzyme Q) to ubiquinol. Required for flavinylation (covalent attachment of FAD) of the flavoprotein subunit of the SDH catalytic dimer. The sequence is that of Succinate dehydrogenase assembly factor 2, mitochondrial from Mycosarcoma maydis (Corn smut fungus).